Here is a 322-residue protein sequence, read N- to C-terminus: Aspartate carbamoyltransferase catalytic subunit (322 aa).

The carbamoyl phosphate site is built by arginine 65 and threonine 66. An L-aspartate-binding site is contributed by lysine 93. Carbamoyl phosphate-binding residues include arginine 115, histidine 143, and glutamine 146. Residues arginine 176 and arginine 230 each coordinate L-aspartate. Carbamoyl phosphate is bound by residues glycine 271 and proline 272.

This sequence belongs to the aspartate/ornithine carbamoyltransferase superfamily. ATCase family. As to quaternary structure, heterododecamer (2C3:3R2) of six catalytic PyrB chains organized as two trimers (C3), and six regulatory PyrI chains organized as three dimers (R2).

It carries out the reaction carbamoyl phosphate + L-aspartate = N-carbamoyl-L-aspartate + phosphate + H(+). Its pathway is pyrimidine metabolism; UMP biosynthesis via de novo pathway; (S)-dihydroorotate from bicarbonate: step 2/3. Functionally, catalyzes the condensation of carbamoyl phosphate and aspartate to form carbamoyl aspartate and inorganic phosphate, the committed step in the de novo pyrimidine nucleotide biosynthesis pathway. The protein is Aspartate carbamoyltransferase catalytic subunit of Brucella abortus (strain S19).